Reading from the N-terminus, the 132-residue chain is D-ribose pyranase (132 aa).

Histidine 20 serves as the catalytic Proton donor. Residues aspartate 28, histidine 99, and 121 to 123 each bind substrate; that span reads YSN.

Belongs to the RbsD / FucU family. RbsD subfamily. Homodecamer.

It is found in the cytoplasm. The enzyme catalyses beta-D-ribopyranose = beta-D-ribofuranose. Its pathway is carbohydrate metabolism; D-ribose degradation; D-ribose 5-phosphate from beta-D-ribopyranose: step 1/2. Catalyzes the interconversion of beta-pyran and beta-furan forms of D-ribose. In Streptococcus agalactiae serotype III (strain NEM316), this protein is D-ribose pyranase.